The chain runs to 566 residues: Oxygen-dependent choline dehydrogenase (566 aa).

7–36 (DYIICGAGSAGNVLATRLTEDPDVTVLLLE) contributes to the FAD binding site. The tract at residues 180–202 (NGYQQEGFGPMDRTVTPKGRRAS) is disordered. His474 functions as the Proton acceptor in the catalytic mechanism.

It belongs to the GMC oxidoreductase family. FAD is required as a cofactor.

It carries out the reaction choline + A = betaine aldehyde + AH2. It catalyses the reaction betaine aldehyde + NAD(+) + H2O = glycine betaine + NADH + 2 H(+). The protein operates within amine and polyamine biosynthesis; betaine biosynthesis via choline pathway; betaine aldehyde from choline (cytochrome c reductase route): step 1/1. In terms of biological role, involved in the biosynthesis of the osmoprotectant glycine betaine. Catalyzes the oxidation of choline to betaine aldehyde and betaine aldehyde to glycine betaine at the same rate. The chain is Oxygen-dependent choline dehydrogenase from Burkholderia cenocepacia (strain HI2424).